The primary structure comprises 440 residues: Thymidine phosphorylase (440 aa).

It belongs to the thymidine/pyrimidine-nucleoside phosphorylase family. Homodimer.

The catalysed reaction is thymidine + phosphate = 2-deoxy-alpha-D-ribose 1-phosphate + thymine. It functions in the pathway pyrimidine metabolism; dTMP biosynthesis via salvage pathway; dTMP from thymine: step 1/2. The enzymes which catalyze the reversible phosphorolysis of pyrimidine nucleosides are involved in the degradation of these compounds and in their utilization as carbon and energy sources, or in the rescue of pyrimidine bases for nucleotide synthesis. The protein is Thymidine phosphorylase of Yersinia pseudotuberculosis serotype O:1b (strain IP 31758).